A 542-amino-acid chain; its full sequence is Cryptochrome-1 (542 aa).

Residues 5–140 form the Photolyase/cryptochrome alpha/beta domain; sequence GANVIWFRHG…DFVEKVSHTL (136 aa). Residues arginine 237, serine 265, serine 267, glutamine 311, histidine 378, 410–412, cysteine 416, and asparagine 419 each bind FAD; that span reads DAD.

It belongs to the DNA photolyase class-1 family. In terms of assembly, interacts with tim and per; promoted by light conditions. Interaction with tim irreversibly commits tim to proteasomal degradation. Interacts with l(1)G0136/CG8198. Requires FAD as cofactor. Expressed at higher levels in the head than in body and it is more expressed in antennae than in legs, wings and mouth appendages. Prominent expression is seen in cells of the lateral brain, which are close to or coincident with the clock neurons. Abundance oscillates in a circadian manner.

The protein localises to the cytoplasm. The protein resides in the perinuclear region. It localises to the nucleus. Functionally, blue light-dependent regulator that is the input of the circadian feedback loop. Has no photolyase activity for cyclobutane pyrimidine dimers or 6-4 photoproducts. Regulation of expression by light suggests a role in photoreception for locomotor activity rhythms. Functions, together with per, as a transcriptional repressor required for the oscillation of peripheral circadian clocks and for the correct specification of clock cells. Genes directly activated by the transcription factors Clock (Clk) and cycle (cyc) are repressed by cry. Necessary for light-dependent magnetosensitivity, an intact circadian system is not required for the magnetoreception mechanism to operate. Required for both the naive and trained responses to magnetic field, consistent with the notion that cry is in the input pathway of magnetic sensing. This Drosophila melanogaster (Fruit fly) protein is Cryptochrome-1.